Consider the following 1434-residue polypeptide: Ankyrin and armadillo repeat-containing protein (1434 aa).

Residues 309 to 329 (IRRGIGYLKLICFLIPFLLSL) traverse the membrane as a helical segment. ANK repeat units follow at residues 532-561 (AGYTIFHHAALHNRVSIICQLCNANFKVNQ), 569-598 (QGPTPLHLAAQACSLETTVCLLCSKADYTL), 602-631 (RGWMPIHFAAFYDNVCIIIALCRKDPSLLE), 638-667 (NQCTPLLLAATSGALDTIQYLFSIGANWRK), and 671-701 (KGNNIIHLSVLTFHTEVLKYIIKLNIPELPV). ARM repeat units follow at residues 732-771 (DQYWRCILDAGTIPALINLLKSSKIKLQCKTVGLLSNIST), 773-812 (KSAVHALVEAGGIPSLINLLVCDEPEVHSRCAVILYDIAQ), 814-852 (ENKDVIAKYNGIPSLINLLNLNIENVLVNVMNCIRVLCI), 855-894 (ENNQRAVREHKGLPYLIRFLSSDSDVLKAVSSAAIAEVGR), 897-936 (KEIQDAIAMEGAIPPLVALFKGKQISVQMKGAMAVESLAS), and 1072-1112 (PVSQ…CIVL).

In terms of tissue distribution, ubiquitously expressed with highest level in pancreas and lowest in skeletal muscle.

Its subcellular location is the membrane. The polypeptide is Ankyrin and armadillo repeat-containing protein (ANKAR) (Homo sapiens (Human)).